Here is a 200-residue protein sequence, read N- to C-terminus: Ependymin-related protein 1 (200 aa).

Positions 1–17 (MILQAALFLAGLTVVSG) are cleaved as a signal peptide. N-linked (GlcNAc...) asparagine glycosylation is found at asparagine 36, asparagine 124, and asparagine 136.

Belongs to the ependymin family. In terms of tissue distribution, component of the acid-soluble and acid-insoluble organic matrix of prismatic shell layers (at protein level). Expressed discontinuously in the anterior zone of the outer fold of the mantle where its expression correlates with shell pigmentation.

The protein resides in the secreted. In Haliotis asinina (Donkey's ear abalone), this protein is Ependymin-related protein 1.